The primary structure comprises 328 residues: MTMSAFDLTKQSTRCTKPEMDCVFPRMKVRDETFTFIDGKWVNEVHCQPTFVPQRRLLSKKTENEWSIWEENRALWEENQVLRIENRMLWEENKALQYLQSQNKGVQLVYSDTIQQSLQKDHKLSPFFPERHLGFQVSPGNKALQLVRERSSVLEFFHRQNRTVPTIWKDQQAIVVHEENKGASSVQKDTENTTAAGEGSLGPTCQEEHDAKEESTTPTQNDTKIAPSTEDDNEILQALQDLYQILRVFLKEKCLSDDRESLHALQDESKFFQEEYKKLKLQLNNVKNTVSDITTQMEMLEKELIAITFPIYEEAGKNMANEYQLGEM.

The disordered stretch occupies residues 180–231 (NKGASSVQKDTENTTAAGEGSLGPTCQEEHDAKEESTTPTQNDTKIAPSTED). The segment covering 182–195 (GASSVQKDTENTTA) has biased composition (polar residues). Residues 206–215 (QEEHDAKEES) show a composition bias toward basic and acidic residues. Residues 259–307 (RESLHALQDESKFFQEEYKKLKLQLNNVKNTVSDITTQMEMLEKELIAI) are a coiled coil.

The protein belongs to the chibby family. SPERT subfamily.

In Gallus gallus (Chicken), this protein is Protein chibby homolog 2 (CBY2).